Consider the following 190-residue polypeptide: Segregation and condensation protein B (190 aa).

The protein belongs to the ScpB family. Homodimer. Homodimerization may be required to stabilize the binding of ScpA to the Smc head domains. Component of a cohesin-like complex composed of ScpA, ScpB and the Smc homodimer, in which ScpA and ScpB bind to the head domain of Smc. The presence of the three proteins is required for the association of the complex with DNA.

Its subcellular location is the cytoplasm. In terms of biological role, participates in chromosomal partition during cell division. May act via the formation of a condensin-like complex containing Smc and ScpA that pull DNA away from mid-cell into both cell halves. The chain is Segregation and condensation protein B from Alkaliphilus metalliredigens (strain QYMF).